The sequence spans 128 residues: UPF0102 protein GSU0650 (128 aa).

This sequence belongs to the UPF0102 family.

The polypeptide is UPF0102 protein GSU0650 (Geobacter sulfurreducens (strain ATCC 51573 / DSM 12127 / PCA)).